We begin with the raw amino-acid sequence, 267 residues long: Chorismate mutase (267 aa).

The 256-residue stretch at 7-262 (LSDASKALDL…EVEYLMQRLK (256 aa)) folds into the Chorismate mutase domain. Positions 77, 78, 145, 147, 148, and 151 each coordinate L-tyrosine. L-tryptophan-binding residues include Asn145, Gly147, and Ser148.

Homodimer.

Its subcellular location is the cytoplasm. It catalyses the reaction chorismate = prephenate. The protein operates within metabolic intermediate biosynthesis; prephenate biosynthesis; prephenate from chorismate: step 1/1. Each dimer has two allosteric binding sites that can bind the regulatory effectors tryptophan or tyrosine. Can bind either one tryptophan or one tyrosine, two tryptophan or two tyrosine or one tryptophan and one tyrosine, which differentially affect the catalytic activity. Activated by tryptophan and subject to feedback inhibition by tyrosine. In the presence of both tryptophan and tyrosine, the enzyme is in the activated state. Catalyzes the Claisen rearrangement of chorismate to prephenate. Acts at the first branch point in the aromatic amino acid pathway where it steers biosynthesis towards phenylalanine and tyrosine, and away from tryptophan. In Emericella nidulans (strain FGSC A4 / ATCC 38163 / CBS 112.46 / NRRL 194 / M139) (Aspergillus nidulans), this protein is Chorismate mutase.